The chain runs to 1166 residues: Tectonin beta-propeller repeat-containing protein 1 (1166 aa).

TECPR repeat units lie at residues 209 to 240, 254 to 285, 301 to 332, and 344 to 376; these read LSVW…SLVE, DLIW…SMVE, SVVW…IEMV, and DQVW…KAIV. Residues Ser-386, Ser-388, Ser-391, Ser-413, and Ser-418 each carry the phosphoserine modification. The segment at 404–496 is disordered; the sequence is RGSGTESAPS…PAELPWTNID (93 aa). Polar residues predominate over residues 407 to 416; sequence GTESAPSDTD. Residues 451-462 show a composition bias toward polar residues; sequence TSGNTDHSTENA. Basic and acidic residues predominate over residues 466–481; sequence EGKEKAPETSRSDECR. The PH domain maps to 616–722; the sequence is KTGALQWWCD…WLALLSLSCC (107 aa). Residues 734–761 form a TECPR 5 repeat; it reads QAIWSVTCKGDIFVSEPSPDLEARERLL. Ser-943 is modified (phosphoserine). TECPR repeat units follow at residues 958-989, 1003-1034, 1049-1080, and 1092-1132; these read VALW…LHVG, YQVW…YHIP, TSVY…EHVS, and DQVW…DYGI.

The protein belongs to the TECPR1 family. In terms of assembly, interacts with ATG5; the interaction is direct. Interacts with WIPI2. Interacts with the ATG5-ATG12 conjugate, the interaction is however mutually exclusive with ATG16, since it does not interact with ATG12-ATG5-ATG16 complex.

It localises to the cytoplasmic vesicle. The protein localises to the autophagosome membrane. Its subcellular location is the lysosome membrane. Tethering factor involved in autophagy. Involved in autophagosome maturation by promoting the autophagosome fusion with lysosomes: acts by associating with both the ATG5-ATG12 conjugate and phosphatidylinositol-3-phosphate (PtdIns(3)P) present at the surface of autophagosomes. Also involved in selective autophagy against bacterial pathogens, by being required for phagophore/preautophagosomal structure biogenesis and maturation. This chain is Tectonin beta-propeller repeat-containing protein 1 (Tecpr1), found in Mus musculus (Mouse).